The following is a 352-amino-acid chain: uncharacterized protein (352 aa).

N-linked (GlcNAc...) asparagine glycans are attached at residues N14, N52, and N70. Residues 41-73 are disordered; sequence LSDYKKNKDTLNNSNNNINQPFENSNNFNNNSK. The span at 50–72 shows a compositional bias: low complexity; that stretch reads TLNNSNNNINQPFENSNNFNNNS. Residues 131-151 form a helical membrane-spanning segment; that stretch reads IIFKSSGLLITLLVLYLGTFF. 6 N-linked (GlcNAc...) asparagine glycosylation sites follow: N165, N186, N192, N193, N203, and N289. Low complexity predominate over residues 193-213; the sequence is NSSNSNNNNINNSNNNNNNNN. The interval 193–219 is disordered; sequence NSSNSNNNNINNSNNNNNNNNRILSPN.

It localises to the membrane. This is an uncharacterized protein from Dictyostelium discoideum (Social amoeba).